We begin with the raw amino-acid sequence, 85 residues long: Large ribosomal subunit protein bL27 (85 aa).

A disordered region spans residues 1–22; that stretch reads MAHKKAGGSTKNGRDSESKRLG.

Belongs to the bacterial ribosomal protein bL27 family.

This is Large ribosomal subunit protein bL27 from Alteromonas mediterranea (strain DSM 17117 / CIP 110805 / LMG 28347 / Deep ecotype).